A 232-amino-acid chain; its full sequence is MTQMTFSDRAVMAELVAKMLWEIKAVHFSADKPYKLASGMASPVYIDCRKLISYPRVRSTVMDFAASLIMRDAGFEQFDCVAGGETAGIPFAAFLAERLNLPMIYVRKQPKGHGRNSQIEGHMPDGARVLVIEDLTTAGGSMFTFIDAIRAAGGIVDHGMALFYYGIFPEAEARFANGKVRLHHIATWRNVLAVAKEQKLFDDKTLEEVEAFLNAPLAWSGRNGGVAELATK.

5-phospho-alpha-D-ribose 1-diphosphate is bound by residues R107, K108, K111, H113, and 133 to 141 (EDLTTAGGS). T137 provides a ligand contact to orotate.

Belongs to the purine/pyrimidine phosphoribosyltransferase family. PyrE subfamily. Homodimer. Mg(2+) serves as cofactor.

It catalyses the reaction orotidine 5'-phosphate + diphosphate = orotate + 5-phospho-alpha-D-ribose 1-diphosphate. It participates in pyrimidine metabolism; UMP biosynthesis via de novo pathway; UMP from orotate: step 1/2. Functionally, catalyzes the transfer of a ribosyl phosphate group from 5-phosphoribose 1-diphosphate to orotate, leading to the formation of orotidine monophosphate (OMP). The protein is Orotate phosphoribosyltransferase of Rhizobium rhizogenes (strain K84 / ATCC BAA-868) (Agrobacterium radiobacter).